Consider the following 248-residue polypeptide: ATP synthase delta chain, chloroplastic (248 aa).

A chloroplast-targeting transit peptide spans 1–60 (MAALQQTPITFQSRSPPPTQIISGPTAKLSFSGGLKLPKLTIKLRSNRTSRRGGGAAGSK).

This sequence belongs to the ATPase delta chain family. In terms of assembly, F-type ATPases have 2 components, CF(1) - the catalytic core - and CF(0) - the membrane proton channel. CF(1) has five subunits: alpha(3), beta(3), gamma(1), delta(1), epsilon(1). CF(0) has three main subunits: a, b and c.

Its subcellular location is the plastid. The protein localises to the chloroplast thylakoid membrane. Its function is as follows. This protein seems to be part of the stalk that links CF(0) to CF(1). It either transmits conformational changes from CF(0) into CF(1) or is implicated in proton conduction. In Nicotiana tabacum (Common tobacco), this protein is ATP synthase delta chain, chloroplastic (ATPD).